The primary structure comprises 62 residues: Translational regulator CsrA (62 aa).

Belongs to the CsrA/RsmA family. Homodimer; the beta-strands of each monomer intercalate to form a hydrophobic core, while the alpha-helices form wings that extend away from the core.

The protein resides in the cytoplasm. Its function is as follows. A key translational regulator that binds mRNA to regulate translation initiation and/or mRNA stability. Mediates global changes in gene expression, shifting from rapid growth to stress survival by linking envelope stress, the stringent response and the catabolite repression systems. Usually binds in the 5'-UTR; binding at or near the Shine-Dalgarno sequence prevents ribosome-binding, repressing translation, binding elsewhere in the 5'-UTR can activate translation and/or stabilize the mRNA. Its function is antagonized by small RNA(s). This chain is Translational regulator CsrA, found in Idiomarina loihiensis (strain ATCC BAA-735 / DSM 15497 / L2-TR).